We begin with the raw amino-acid sequence, 82 residues long: Translational regulator CsrA (82 aa).

The protein belongs to the CsrA/RsmA family. Homodimer; the beta-strands of each monomer intercalate to form a hydrophobic core, while the alpha-helices form wings that extend away from the core.

It is found in the cytoplasm. A translational regulator that binds mRNA to regulate translation initiation and/or mRNA stability. Usually binds in the 5'-UTR at or near the Shine-Dalgarno sequence preventing ribosome-binding, thus repressing translation. Its main target seems to be the major flagellin gene, while its function is anatagonized by FliW. The chain is Translational regulator CsrA from Geobacillus sp. (strain WCH70).